The following is a 383-amino-acid chain: Probable aspartate/prephenate aminotransferase (383 aa).

L-aspartate-binding residues include G39, W125, and N175. At K234 the chain carries N6-(pyridoxal phosphate)lysine. L-aspartate is bound at residue R361.

Belongs to the class-I pyridoxal-phosphate-dependent aminotransferase family. As to quaternary structure, homodimer. Requires pyridoxal 5'-phosphate as cofactor.

The protein resides in the cytoplasm. It catalyses the reaction L-aspartate + 2-oxoglutarate = oxaloacetate + L-glutamate. The catalysed reaction is L-arogenate + oxaloacetate = prephenate + L-aspartate. Catalyzes the reversible conversion of aspartate and 2-oxoglutarate to glutamate and oxaloacetate. Can also transaminate prephenate in the presence of aspartate. This Thermus aquaticus protein is Probable aspartate/prephenate aminotransferase (aspC).